The following is a 315-amino-acid chain: ATP synthase gamma chain (315 aa).

It belongs to the ATPase gamma chain family. F-type ATPases have 2 components, CF(1) - the catalytic core - and CF(0) - the membrane proton channel. CF(1) has five subunits: alpha(3), beta(3), gamma(1), delta(1), epsilon(1). CF(0) has three main subunits: a, b and c.

It is found in the cellular thylakoid membrane. Its function is as follows. Produces ATP from ADP in the presence of a proton gradient across the membrane. The gamma chain is believed to be important in regulating ATPase activity and the flow of protons through the CF(0) complex. In Trichormus variabilis (strain ATCC 29413 / PCC 7937) (Anabaena variabilis), this protein is ATP synthase gamma chain.